The chain runs to 502 residues: Bone morphogenetic protein receptor type-1B (502 aa).

Residues M1–S10 show a composition bias toward polar residues. The first 13 residues, M1–S13, serve as a signal peptide directing secretion. A disordered region spans residues M1 to Q27. The Extracellular portion of the chain corresponds to R14 to K126. Cystine bridges form between C32-C53, C34-C38, C47-C71, C81-C95, and C96-C102. A glycan (N-linked (GlcNAc...) asparagine) is linked at N44. A helical membrane pass occupies residues A127–F148. The Cytoplasmic segment spans residues R149–L502. Residues E174–Q203 form the GS domain. Positions I204–M494 constitute a Protein kinase domain. ATP contacts are provided by residues I210–V218 and K231. The active-site Proton acceptor is D332.

This sequence belongs to the protein kinase superfamily. TKL Ser/Thr protein kinase family. TGFB receptor subfamily. Requires Mg(2+) as cofactor. It depends on Mn(2+) as a cofactor. Post-translationally, autophosphorylated.

It localises to the cell membrane. It carries out the reaction L-threonyl-[receptor-protein] + ATP = O-phospho-L-threonyl-[receptor-protein] + ADP + H(+). It catalyses the reaction L-seryl-[receptor-protein] + ATP = O-phospho-L-seryl-[receptor-protein] + ADP + H(+). In terms of biological role, on ligand binding, forms a receptor complex consisting of two type II and two type I transmembrane serine/threonine kinases. Type II receptors phosphorylate and activate type I receptors which autophosphorylate, then bind and activate SMAD transcription. Positively regulates chondrocyte differentiation. This Gallus gallus (Chicken) protein is Bone morphogenetic protein receptor type-1B (BMPR1B).